A 249-amino-acid polypeptide reads, in one-letter code: Triosephosphate isomerase (249 aa).

Residue 9 to 11 coordinates substrate; that stretch reads NWK. Catalysis depends on His95, which acts as the Electrophile. Glu166 acts as the Proton acceptor in catalysis. Substrate contacts are provided by residues Gly172, Ser211, and 232-233; that span reads GG.

This sequence belongs to the triosephosphate isomerase family. Homodimer.

It is found in the cytoplasm. The catalysed reaction is D-glyceraldehyde 3-phosphate = dihydroxyacetone phosphate. It participates in carbohydrate biosynthesis; gluconeogenesis. The protein operates within carbohydrate degradation; glycolysis; D-glyceraldehyde 3-phosphate from glycerone phosphate: step 1/1. Functionally, involved in the gluconeogenesis. Catalyzes stereospecifically the conversion of dihydroxyacetone phosphate (DHAP) to D-glyceraldehyde-3-phosphate (G3P). In Legionella pneumophila subsp. pneumophila (strain Philadelphia 1 / ATCC 33152 / DSM 7513), this protein is Triosephosphate isomerase.